The following is a 473-amino-acid chain: GTPase Der (473 aa).

EngA-type G domains lie at 3-166 (PVIA…ENPE) and 177-350 (IRIG…ESAM). GTP contacts are provided by residues 9–16 (GRPNVGKS), 56–60 (DTGGL), 118–121 (NKTD), 183–190 (GRPNVGKS), 230–234 (DTAGV), and 295–298 (NKWD). The 85-residue stretch at 351-435 (SKWPTNRLTA…PIRFEFKSGE (85 aa)) folds into the KH-like domain. Over residues 444 to 458 (RLTPRQKVKKDNDLK) the composition is skewed to basic and acidic residues. The segment at 444–473 (RLTPRQKVKKDNDLKKGRRIKKTRQKSVKR) is disordered. Over residues 459–473 (KGRRIKKTRQKSVKR) the composition is skewed to basic residues.

The protein belongs to the TRAFAC class TrmE-Era-EngA-EngB-Septin-like GTPase superfamily. EngA (Der) GTPase family. In terms of assembly, associates with the 50S ribosomal subunit.

Its function is as follows. GTPase that plays an essential role in the late steps of ribosome biogenesis. The chain is GTPase Der from Marinobacter nauticus (strain ATCC 700491 / DSM 11845 / VT8) (Marinobacter aquaeolei).